A 116-amino-acid chain; its full sequence is MDKKTSRLRRALRARKKIQELGVNRLVVHRTPRHIYAQVINPEAQVLAVASTVEKAVKELLKSTGNVDAAKAVGKIVAERAIEKGVATVAFDRSGFKYHGRVAALADAAREAGLKF.

This sequence belongs to the universal ribosomal protein uL18 family. As to quaternary structure, part of the 50S ribosomal subunit; part of the 5S rRNA/L5/L18/L25 subcomplex. Contacts the 5S and 23S rRNAs.

This is one of the proteins that bind and probably mediate the attachment of the 5S RNA into the large ribosomal subunit, where it forms part of the central protuberance. The polypeptide is Large ribosomal subunit protein uL18 (Shewanella frigidimarina (strain NCIMB 400)).